Here is a 113-residue protein sequence, read N- to C-terminus: Integration host factor subunit alpha (113 aa).

This sequence belongs to the bacterial histone-like protein family. Heterodimer of an alpha and a beta chain.

In terms of biological role, this protein is one of the two subunits of integration host factor, a specific DNA-binding protein that functions in genetic recombination as well as in transcriptional and translational control. This Rhodopseudomonas palustris (strain BisA53) protein is Integration host factor subunit alpha.